The following is a 148-amino-acid chain: Large ribosomal subunit protein bL9 (148 aa).

This sequence belongs to the bacterial ribosomal protein bL9 family.

Functionally, binds to the 23S rRNA. This is Large ribosomal subunit protein bL9 from Salinispora arenicola (strain CNS-205).